A 373-amino-acid polypeptide reads, in one-letter code: Dual-specificity RNA methyltransferase RlmN (373 aa).

E94 acts as the Proton acceptor in catalysis. Residues 100-339 (EDDRATLCVS…VIVRKTRGDD (240 aa)) form the Radical SAM core domain. An intrachain disulfide couples C107 to C344. Positions 114, 118, and 121 each coordinate [4Fe-4S] cluster. S-adenosyl-L-methionine is bound by residues 168-169 (GE), S200, 222-224 (SIH), and N301. The active-site S-methylcysteine intermediate is C344.

It belongs to the radical SAM superfamily. RlmN family. It depends on [4Fe-4S] cluster as a cofactor.

It localises to the cytoplasm. The enzyme catalyses adenosine(2503) in 23S rRNA + 2 reduced [2Fe-2S]-[ferredoxin] + 2 S-adenosyl-L-methionine = 2-methyladenosine(2503) in 23S rRNA + 5'-deoxyadenosine + L-methionine + 2 oxidized [2Fe-2S]-[ferredoxin] + S-adenosyl-L-homocysteine. It catalyses the reaction adenosine(37) in tRNA + 2 reduced [2Fe-2S]-[ferredoxin] + 2 S-adenosyl-L-methionine = 2-methyladenosine(37) in tRNA + 5'-deoxyadenosine + L-methionine + 2 oxidized [2Fe-2S]-[ferredoxin] + S-adenosyl-L-homocysteine. In terms of biological role, specifically methylates position 2 of adenine 2503 in 23S rRNA and position 2 of adenine 37 in tRNAs. m2A2503 modification seems to play a crucial role in the proofreading step occurring at the peptidyl transferase center and thus would serve to optimize ribosomal fidelity. This is Dual-specificity RNA methyltransferase RlmN from Shewanella oneidensis (strain ATCC 700550 / JCM 31522 / CIP 106686 / LMG 19005 / NCIMB 14063 / MR-1).